The following is a 396-amino-acid chain: Maltose/maltodextrin-binding periplasmic protein (396 aa).

Residues 1–26 form the signal peptide; it reads MKIKTGVGILALSALTTMMISAPALA.

The protein belongs to the bacterial solute-binding protein 1 family. The complex is composed of two ATP-binding proteins (MalK), two transmembrane proteins (MalG and MalF) and a solute-binding protein (MalE).

The protein resides in the periplasm. In terms of biological role, part of the ABC transporter complex MalEFGK involved in maltose/maltodextrin import. Binds maltose and higher maltodextrins. This is Maltose/maltodextrin-binding periplasmic protein (malE) from Salmonella typhimurium (strain LT2 / SGSC1412 / ATCC 700720).